The sequence spans 537 residues: Ceramide kinase (537 aa).

The interval 1 to 115 is essential for enzyme activity; that stretch reads MGATGAAEPL…CPEEQLCHLW (115 aa). Residues 1 to 125 are required for binding to sulfatide and phosphoinositides; that stretch reads MGATGAAEPL…LQTLREMLEK (125 aa). The 151-residue stretch at 128–278 folds into the DAGKc domain; sequence SRPKHLLVFI…MDVSSVHHNS (151 aa). Residues 138–140 and 170–174 each bind ATP; these read NPF and TEHAN. 195-198 provides a ligand contact to substrate; it reads GGDG. Asp-197 (proton donor/acceptor) is an active-site residue. ATP-binding positions include Glu-202, 239-241, Arg-304, and Arg-310; that span reads GST. A phosphoserine mark is found at Ser-340 and Ser-408. Position 502-504 (502-504) interacts with ATP; sequence DGE.

The cofactor is Ca(2+). It depends on Mg(2+) as a cofactor. High level expression in heart, brain, skeletal muscle, kidney and liver; moderate in peripheral blood leukocytes and thymus; very low in spleen, small intestine, placenta and lung.

It is found in the cytoplasm. The protein resides in the cell membrane. The catalysed reaction is an N-acylsphing-4-enine + ATP = an N-acylsphing-4-enine 1-phosphate + ADP + H(+). It catalyses the reaction N-(hexanoyl)sphing-4-enine + ATP = N-hexanoylsphing-4-enine 1-phosphate + ADP + H(+). It carries out the reaction N-(acetyl)-sphing-4-enine + ATP = N-(acetyl)-sphing-4-enine-1-phosphate + ADP + H(+). The enzyme catalyses N-hexadecanoylsphing-4-enine + ATP = N-(hexadecanoyl)-sphing-4-enine-1-phosphate + ADP + H(+). The catalysed reaction is N-hexanoyl-(4R)-hydroxysphinganine + ATP = N-hexanoyl-(4R)-hydroxysphinganine-1-phosphate + ADP + H(+). Inhibited by sulfatide. Inhibited by sphinganine, sphingenine, and N,N-Dimethylsphingosine (DMS). Cardiolipin at 0.1 uM significantly increases activity, whereas at concentrations &gt;1 uM has an inhibitory effect. Its function is as follows. Catalyzes specifically the phosphorylation of ceramide to form ceramide 1-phosphate. Acts efficiently on natural and analog ceramides (C6, C8, C16 ceramides, and C8-dihydroceramide), to a lesser extent on C2-ceramide and C6-dihydroceramide, but not on other lipids, such as various sphingosines. Shows a greater preference for D-erythro isomer of ceramides. Binds phosphoinositides. The protein is Ceramide kinase (CERK) of Homo sapiens (Human).